Here is a 316-residue protein sequence, read N- to C-terminus: MANLFDQLKEFTTIVADTGDVEAIKSVKPYDATTNPSLLLKASTIPQYAPLIDEAIAYAKSQSGDKAQQIEDAADKLAVLIGLEILKHIPGKISTEVDARLSFDTEAMVQKGRKLIKLYEDAGIAKDRVLIKLASTWEGIKAGEILEKEGINCNLTLLFSFAQARACAEAGVFLISPFVGRILDWYKAKTGETYTAETDPGVQSVRKIYAYYKEHGYKTVVMGASFRNTGEIIALAGCDRLTVSPNLLEELKATEGKLERVLVDNGVTKQRPPLLTEKEFRFDLNEDAMATEKLAEGIRGFVVDQNKLEKALAEKL.

K132 (schiff-base intermediate with substrate) is an active-site residue.

This sequence belongs to the transaldolase family. Type 1 subfamily. In terms of assembly, homodimer.

It localises to the cytoplasm. It catalyses the reaction D-sedoheptulose 7-phosphate + D-glyceraldehyde 3-phosphate = D-erythrose 4-phosphate + beta-D-fructose 6-phosphate. Its pathway is carbohydrate degradation; pentose phosphate pathway; D-glyceraldehyde 3-phosphate and beta-D-fructose 6-phosphate from D-ribose 5-phosphate and D-xylulose 5-phosphate (non-oxidative stage): step 2/3. Functionally, transaldolase is important for the balance of metabolites in the pentose-phosphate pathway. This chain is Transaldolase, found in Methylobacillus flagellatus (strain ATCC 51484 / DSM 6875 / VKM B-1610 / KT).